The primary structure comprises 341 residues: Phosphoribosylformylglycinamidine cyclo-ligase (341 aa).

This sequence belongs to the AIR synthase family.

It is found in the cytoplasm. It catalyses the reaction 2-formamido-N(1)-(5-O-phospho-beta-D-ribosyl)acetamidine + ATP = 5-amino-1-(5-phospho-beta-D-ribosyl)imidazole + ADP + phosphate + H(+). It functions in the pathway purine metabolism; IMP biosynthesis via de novo pathway; 5-amino-1-(5-phospho-D-ribosyl)imidazole from N(2)-formyl-N(1)-(5-phospho-D-ribosyl)glycinamide: step 2/2. The polypeptide is Phosphoribosylformylglycinamidine cyclo-ligase (Xanthomonas euvesicatoria pv. vesicatoria (strain 85-10) (Xanthomonas campestris pv. vesicatoria)).